The sequence spans 258 residues: MVLIRVLANLLILQLSYAQKSSELVVGGDECNINEHRSLVVFFNSSGFLCGGTSINQEWVLTAAHCDSKNFQMLFGVHSKKILNEDEQTRDPKEKFICPNRKKDDERDKDIMLIRLDSPVSNSEHIAPLSLPSSPPSVGSVCRIMGWGTISPTKVTYPDVPHCANINILDHAVCRAAYPTLLAESSTVCAGTQQEGKDTCGGDSGGPLICNGQIQGIVSWRAHPCGQGLKPGVYTKVFDYTDWIQSIISGNTDVTCPP.

Residues 1 to 18 (MVLIRVLANLLILQLSYA) form the signal peptide. A propeptide spanning residues 19 to 24 (QKSSEL) is cleaved from the precursor. In terms of domain architecture, Peptidase S1 spans 25-249 (VVGGDECNIN…YTDWIQSIIS (225 aa)). Intrachain disulfides connect Cys-31–Cys-163, Cys-50–Cys-66, Cys-98–Cys-256, Cys-142–Cys-210, Cys-174–Cys-189, and Cys-200–Cys-225. N-linked (GlcNAc...) asparagine glycosylation is present at Asn-44. Residues His-65 and Asp-110 each act as charge relay system in the active site. Ser-204 functions as the Charge relay system in the catalytic mechanism.

This sequence belongs to the peptidase S1 family. Snake venom subfamily. In terms of assembly, monomer. As to expression, expressed by the venom gland.

Its subcellular location is the secreted. Functionally, snake venom serine protease that activates plasminogen. Shows a preferential cleavage at Arg-|-Xaa instead of Lys-|-Xaa bonds. This chain is Venom plasminogen activator, found in Agkistrodon piscivorus leucostoma (Western cottonmouth).